Reading from the N-terminus, the 338-residue chain is Flap endonuclease 1 (338 aa).

Residues 1-98 (MGVNLSSILI…ETLRERSLIK (98 aa)) are N-domain. Mg(2+) contacts are provided by D27, D80, E152, E154, D173, D175, and D236. Positions 116-257 (KIRSLSSRIN…TALSLIKKYN (142 aa)) are I-domain. The interaction with PCNA stretch occupies residues 330–338 (HQSSLDRFF).

This sequence belongs to the XPG/RAD2 endonuclease family. FEN1 subfamily. As to quaternary structure, interacts with PCNA. PCNA stimulates the nuclease activity without altering cleavage specificity. Requires Mg(2+) as cofactor.

Structure-specific nuclease with 5'-flap endonuclease and 5'-3' exonuclease activities involved in DNA replication and repair. During DNA replication, cleaves the 5'-overhanging flap structure that is generated by displacement synthesis when DNA polymerase encounters the 5'-end of a downstream Okazaki fragment. Binds the unpaired 3'-DNA end and kinks the DNA to facilitate 5' cleavage specificity. Cleaves one nucleotide into the double-stranded DNA from the junction in flap DNA, leaving a nick for ligation. Also involved in the base excision repair (BER) pathway. Acts as a genome stabilization factor that prevents flaps from equilibrating into structures that lead to duplications and deletions. Also possesses 5'-3' exonuclease activity on nicked or gapped double-stranded DNA. The sequence is that of Flap endonuclease 1 from Picrophilus torridus (strain ATCC 700027 / DSM 9790 / JCM 10055 / NBRC 100828 / KAW 2/3).